The chain runs to 171 residues: Small ribosomal subunit protein uS4 (171 aa).

In terms of domain architecture, S4 RNA-binding spans 103–167 (RRLQTLVHKR…SPMKKQIEAA (65 aa)).

The protein belongs to the universal ribosomal protein uS4 family. As to quaternary structure, part of the 30S ribosomal subunit. Contacts protein S5. The interaction surface between S4 and S5 is involved in control of translational fidelity.

One of the primary rRNA binding proteins, it binds directly to 16S rRNA where it nucleates assembly of the body of the 30S subunit. In terms of biological role, with S5 and S12 plays an important role in translational accuracy. The protein is Small ribosomal subunit protein uS4 of Methanothermobacter thermautotrophicus (strain ATCC 29096 / DSM 1053 / JCM 10044 / NBRC 100330 / Delta H) (Methanobacterium thermoautotrophicum).